Reading from the N-terminus, the 526-residue chain is tRNA-2-methylthio-N(6)-dimethylallyladenosine synthase (526 aa).

The 117-residue stretch at 14–130 (RTYQVRTYGC…LPTLLERARH (117 aa)) folds into the MTTase N-terminal domain. 6 residues coordinate [4Fe-4S] cluster: cysteine 23, cysteine 59, cysteine 93, cysteine 167, cysteine 171, and cysteine 174. The Radical SAM core domain occupies 153 to 401 (RESAYAGWVS…IELQERISLE (249 aa)). The TRAM domain maps to 404 to 483 (QAQVGRTLEL…PHHLIADGAL (80 aa)).

It belongs to the methylthiotransferase family. MiaB subfamily. As to quaternary structure, monomer. Requires [4Fe-4S] cluster as cofactor.

It is found in the cytoplasm. It catalyses the reaction N(6)-dimethylallyladenosine(37) in tRNA + (sulfur carrier)-SH + AH2 + 2 S-adenosyl-L-methionine = 2-methylsulfanyl-N(6)-dimethylallyladenosine(37) in tRNA + (sulfur carrier)-H + 5'-deoxyadenosine + L-methionine + A + S-adenosyl-L-homocysteine + 2 H(+). Functionally, catalyzes the methylthiolation of N6-(dimethylallyl)adenosine (i(6)A), leading to the formation of 2-methylthio-N6-(dimethylallyl)adenosine (ms(2)i(6)A) at position 37 in tRNAs that read codons beginning with uridine. In Mycobacterium sp. (strain JLS), this protein is tRNA-2-methylthio-N(6)-dimethylallyladenosine synthase.